A 348-amino-acid chain; its full sequence is NADH-ubiquinone oxidoreductase chain 2 (348 aa).

Helical transmembrane passes span Val-13–Leu-33, Phe-60–Leu-80, Pro-96–Val-116, Pro-124–Tyr-144, Ile-150–Gly-170, Thr-200–Leu-220, Leu-241–Phe-261, Ile-278–Ile-298, and Leu-325–Leu-345.

This sequence belongs to the complex I subunit 2 family. In terms of assembly, core subunit of respiratory chain NADH dehydrogenase (Complex I) which is composed of 45 different subunits. Interacts with TMEM242.

Its subcellular location is the mitochondrion inner membrane. It catalyses the reaction a ubiquinone + NADH + 5 H(+)(in) = a ubiquinol + NAD(+) + 4 H(+)(out). Functionally, core subunit of the mitochondrial membrane respiratory chain NADH dehydrogenase (Complex I) which catalyzes electron transfer from NADH through the respiratory chain, using ubiquinone as an electron acceptor. Essential for the catalytic activity and assembly of complex I. In Papio hamadryas (Hamadryas baboon), this protein is NADH-ubiquinone oxidoreductase chain 2.